A 304-amino-acid chain; its full sequence is GTP cyclohydrolase FolE2 (304 aa).

Belongs to the GTP cyclohydrolase IV family.

The catalysed reaction is GTP + H2O = 7,8-dihydroneopterin 3'-triphosphate + formate + H(+). The protein operates within cofactor biosynthesis; 7,8-dihydroneopterin triphosphate biosynthesis; 7,8-dihydroneopterin triphosphate from GTP: step 1/1. Functionally, converts GTP to 7,8-dihydroneopterin triphosphate. This chain is GTP cyclohydrolase FolE2, found in Chromohalobacter salexigens (strain ATCC BAA-138 / DSM 3043 / CIP 106854 / NCIMB 13768 / 1H11).